We begin with the raw amino-acid sequence, 483 residues long: MLSATKQTFRSLQIRTMSTNTKHYDYLVIGGGSGGVASARRAASYGAKTLLVEAKALGGTCVNVGCVPKKVMWYASDLATRVSHANEYGLYQNLPLDKEHLTFNWPEFKQKRDAYVHRLNGIYQKNLEKEKVDVVFGWARFNKDGNVEVQKRDNTTEVYSANHILVATGGKAIFPENIPGFELGTDSDGFFRLEEQPKKVVVVGAGYIGIELAGVFHGLGSETHLVIRGETVLRKFDECIQNTITDHYVKEGINVHKLSKIVKVEKNVETDKLKIHMNDSKSIDDVDELIWTIGRKSHLGMGSENVGIKLNSHDQIIADEYQNTNVPNIYSLGDVVGKVELTPVAIAAGRKLSNRLFGPEKFRNDKLDYENVPSVIFSHPEAGSIGISEKEAIEKYGKENIKVYNSKFTAMYYAMLSEKSPTRYKIVCAGPNEKVVGLHIVGDSSAEILQGFGVAIKMGATKADFDNCVAIHPTSAEELVTMR.

An N-acetylmethionine modification is found at Met-1. Leu-2 bears the N-acetylserine mark. Residues Ser-33 and Gly-34 each contribute to the FAD site. Ser-33 serves as a coordination point for glutathione. Residue Arg-40 coordinates glutathione. 4 residues coordinate FAD: Glu-53, Thr-60, Cys-61, and Lys-69. Cys-61 and Cys-66 are disulfide-bonded. A glutathione-binding site is contributed by Tyr-123. Position 139 (Ala-139) interacts with FAD. NADP(+)-binding residues include Ala-205, Ile-208, Glu-211, Arg-228, and Arg-234. Residue Thr-243 participates in glutathione binding. Residue Asn-278 is glycosylated (N-linked (GlcNAc...) asparagine). Gly-294 serves as a coordination point for NADP(+). Asp-334 lines the FAD pocket. Glu-340 serves as a coordination point for NADP(+). Thr-342 is a binding site for FAD. Glutathione is bound at residue Arg-350. Val-375 provides a ligand contact to NADP(+). Residue Lys-425 coordinates glutathione. His-472 provides a ligand contact to FAD. Residue His-472 is the Proton acceptor of the active site.

The protein belongs to the class-I pyridine nucleotide-disulfide oxidoreductase family. As to quaternary structure, homodimer. Requires FAD as cofactor.

It is found in the cytoplasm. Its subcellular location is the nucleus. The protein localises to the mitochondrion. It localises to the peroxisome. It carries out the reaction 2 glutathione + NADP(+) = glutathione disulfide + NADPH + H(+). Functionally, catalyzes the reduction of glutathione disulfide (GSSG) to reduced glutathione (GSH). Constitutes the major mechanism to maintain a high GSH:GSSG ratio in the cytosol. In Saccharomyces cerevisiae (strain ATCC 204508 / S288c) (Baker's yeast), this protein is Glutathione reductase.